Here is a 522-residue protein sequence, read N- to C-terminus: Sterol O-acyltransferase 2 (522 aa).

Disordered stretches follow at residues 1-36 (MEPG…HRAP) and 74-96 (SYPS…TQEP). Residues 1–120 (MEPGGARLRL…LDELMEVQHF (120 aa)) are Cytoplasmic-facing. Residues 17–36 (GGERERQPCGDGNTETHRAP) are compositionally biased toward basic and acidic residues. A cholesterol-binding site is contributed by H119. A helical membrane pass occupies residues 121–142 (RTIYHMFIAGLCVFIISTLAID). The Lumenal portion of the chain corresponds to 143–162 (FIDEGRLLLEFDLLIFSFGQ). The chain crosses the membrane as a helical span at residues 163-188 (LPLALVTWVPMFLSTLLAPYQALRLW). Residues 189–196 (ARGTWTQA) lie on the Cytoplasmic side of the membrane. A helical membrane pass occupies residues 197 to 220 (TGLGCALLAAHAVVLCALPVHVAV). Residues 221–228 (EHQLPPAS) are Lumenal-facing. Residues 229–252 (RCVLVFEQVRFLMKSYSFLREAVP) traverse the membrane as a helical segment. The Cytoplasmic segment spans residues 253 to 293 (GTLRARRGEGIQAPSFSSYLYFLFCPTLIYRETYPRTPYVR). At C277 the chain carries Cysteine sulfenic acid (-SOH); alternate. C277 participates in a covalent cross-link: Glycyl cysteine thioester (Cys-Gly) (interchain with G-Cter in ubiquitin); alternate. A helical membrane pass occupies residues 294-326 (WNYVAKNFAQALGCVLYACFILGRLCVPVFANM). The Lumenal segment spans residues 327–343 (SREPFSTRALVLSILHA). Residues 344–369 (TLPGIFMLLLIFFAFLHCWLNAFAEM) traverse the membrane as a helical segment. The Cytoplasmic segment spans residues 370–417 (LRFGDRMFYRDWWNSTSFSNYYRTWNVVVHDWLYSYVYQDGLRLLGAR). An FYXDWWN motif motif is present at residues 377 to 383 (FYRDWWN). Positions 389, 392, 395, 399, 407, and 430 each coordinate an acyl-CoA. A helical membrane pass occupies residues 418 to 442 (ARGVAMLGVFLVSAVAHEYIFCFVL). H434 is a catalytic residue. Over 443 to 448 (GFFYPV) the chain is Lumenal. The chain crosses the membrane as a helical span at residues 449 to 464 (MLILFLVIGGMLNFMM). Residues 465–470 (HDQRTG) lie on the Cytoplasmic side of the membrane. A helical membrane pass occupies residues 471–502 (PAWNVLMWTMLFLGQGIQVSLYCQEWYARRHC). Topologically, residues 503 to 522 (PLPQATFWGLVTPRSWSCHT) are lumenal.

This sequence belongs to the membrane-bound acyltransferase family. Sterol o-acyltransferase subfamily. As to quaternary structure, may form homo- or heterodimers. Interacts with INSIG1; the interaction is direct and promotes association with AMFR/gp78. Polyubiquitinated by AMFR/gp78 at Cys-277, leading to its degradation when the lipid levels are low. Association with AMFR/gp78 is mediated via interaction with INSIG1. High concentration of cholesterol and fatty acid results in Cys-277 oxidation, preventing ubiquitination at the same site, resulting in protein stabilization. In terms of processing, oxidized at Cys-277: high concentration of cholesterol and fatty acid induce reactive oxygen species, which oxidizes Cys-277, preventing ubiquitination at the same site, and resulting in protein stabilization. In terms of tissue distribution, expression seems confined in hepatocytes and enterocytes.

The protein localises to the endoplasmic reticulum membrane. It carries out the reaction a sterol + a long-chain fatty acyl-CoA = a long-chain 3-hydroxysterol ester + CoA. The enzyme catalyses cholesterol + an acyl-CoA = a cholesterol ester + CoA. It catalyses the reaction cholesterol + (9Z)-octadecenoyl-CoA = cholesteryl (9Z-octadecenoate) + CoA. The catalysed reaction is (5Z,8Z,11Z,14Z,17Z)-eicosapentaenoyl-CoA + cholesterol = (5Z,8Z,11Z,14Z,17Z-eicosapentaenoyl)-cholesterol + CoA. It carries out the reaction (9Z,12Z,15Z)-octadecatrienoyl-CoA + cholesterol = (9Z,12Z,15Z-octadecatrienoyl)-cholesterol + CoA. The enzyme catalyses (5Z,8Z,11Z,14Z)-eicosatetraenoyl-CoA + cholesterol = cholesteryl (5Z,8Z,11Z,14Z)-eicosatetraenoate + CoA. Its function is as follows. Catalyzes the formation of fatty acid-cholesterol esters, which are less soluble in membranes than cholesterol. Plays a role in lipoprotein assembly and dietary cholesterol absorption. Utilizes oleoyl-CoA ((9Z)-octadecenoyl-CoA) and linolenoyl-CoA ((9Z,12Z,15Z)-octadecatrienoyl-CoA) as substrates. May provide cholesteryl esters for lipoprotein secretion from hepatocytes and intestinal mucosa. Has lower enzymatic activity compared to isoform 1. This chain is Sterol O-acyltransferase 2, found in Homo sapiens (Human).